The primary structure comprises 195 residues: Phosphoribosylglycinamide formyltransferase (195 aa).

Position 12–14 (12–14 (GSN)) interacts with N(1)-(5-phospho-beta-D-ribosyl)glycinamide. Residues Lys-65, 90-93 (MRLI), and Asn-107 each bind (6R)-10-formyltetrahydrofolate. The active-site Proton donor is His-109.

Belongs to the GART family.

The enzyme catalyses N(1)-(5-phospho-beta-D-ribosyl)glycinamide + (6R)-10-formyltetrahydrofolate = N(2)-formyl-N(1)-(5-phospho-beta-D-ribosyl)glycinamide + (6S)-5,6,7,8-tetrahydrofolate + H(+). Its pathway is purine metabolism; IMP biosynthesis via de novo pathway; N(2)-formyl-N(1)-(5-phospho-D-ribosyl)glycinamide from N(1)-(5-phospho-D-ribosyl)glycinamide (10-formyl THF route): step 1/1. Catalyzes the transfer of a formyl group from 10-formyltetrahydrofolate to 5-phospho-ribosyl-glycinamide (GAR), producing 5-phospho-ribosyl-N-formylglycinamide (FGAR) and tetrahydrofolate. The protein is Phosphoribosylglycinamide formyltransferase of Bacillus subtilis (strain 168).